Here is a 469-residue protein sequence, read N- to C-terminus: UDP-N-acetylmuramoylalanine--D-glutamate ligase (469 aa).

An ATP-binding site is contributed by 125-131 (GTNGKTT).

Belongs to the MurCDEF family.

The protein localises to the cytoplasm. It carries out the reaction UDP-N-acetyl-alpha-D-muramoyl-L-alanine + D-glutamate + ATP = UDP-N-acetyl-alpha-D-muramoyl-L-alanyl-D-glutamate + ADP + phosphate + H(+). Its pathway is cell wall biogenesis; peptidoglycan biosynthesis. Functionally, cell wall formation. Catalyzes the addition of glutamate to the nucleotide precursor UDP-N-acetylmuramoyl-L-alanine (UMA). The sequence is that of UDP-N-acetylmuramoylalanine--D-glutamate ligase from Prochlorococcus marinus (strain NATL2A).